Consider the following 509-residue polypeptide: 3-octaprenyl-4-hydroxybenzoate carboxy-lyase (509 aa).

N179 is a Mn(2+) binding site. Prenylated FMN contacts are provided by residues 182–184, 196–198, and 201–202; these read IYR, RWL, and RG. E245 is a binding site for Mn(2+). Residue D304 is the Proton donor of the active site.

The protein belongs to the UbiD family. Homohexamer. Requires prenylated FMN as cofactor. Mn(2+) is required as a cofactor.

It is found in the cell membrane. The catalysed reaction is a 4-hydroxy-3-(all-trans-polyprenyl)benzoate + H(+) = a 2-(all-trans-polyprenyl)phenol + CO2. The protein operates within cofactor biosynthesis; ubiquinone biosynthesis. In terms of biological role, catalyzes the decarboxylation of 3-octaprenyl-4-hydroxy benzoate to 2-octaprenylphenol, an intermediate step in ubiquinone biosynthesis. The chain is 3-octaprenyl-4-hydroxybenzoate carboxy-lyase from Cupriavidus pinatubonensis (strain JMP 134 / LMG 1197) (Cupriavidus necator (strain JMP 134)).